A 281-amino-acid polypeptide reads, in one-letter code: Nucleoid occlusion protein (281 aa).

The tract at residues 1 to 26 (MKHPFSRLFSFGEKEQEEAGGKQERE) is disordered. Residues 12-26 (GEKEQEEAGGKQERE) are compositionally biased toward basic and acidic residues. The segment at residues 145–164 (EALAQRLGKGQSTIANKLRL) is a DNA-binding region (H-T-H motif).

Belongs to the ParB family.

It localises to the cytoplasm. The protein localises to the nucleoid. Functionally, effects nucleoid occlusion by binding relatively nonspecifically to DNA and preventing the assembly of the division machinery in the vicinity of the nucleoid, especially under conditions that disturb the cell cycle. It helps to coordinate cell division and chromosome segregation by preventing the formation of the Z ring through the nucleoid, which would cause chromosome breakage. The chain is Nucleoid occlusion protein from Geobacillus thermodenitrificans (strain NG80-2).